A 428-amino-acid chain; its full sequence is Adenylosuccinate synthetase (428 aa).

Residues 12–18 and 40–42 contribute to the GTP site; these read GDEGKGK and GHT. Asp-13 serves as the catalytic Proton acceptor. 2 residues coordinate Mg(2+): Asp-13 and Gly-40. IMP is bound by residues 13 to 16, 38 to 41, Thr-130, Arg-144, Gln-225, Thr-240, and Arg-304; these read DEGK and NAGH. Catalysis depends on His-41, which acts as the Proton donor. 300-306 is a binding site for substrate; it reads ATTGRPR. GTP is bound by residues Arg-306, 332-334, and 415-417; these read KLD and SVG.

The protein belongs to the adenylosuccinate synthetase family. As to quaternary structure, homodimer. The cofactor is Mg(2+).

It is found in the cytoplasm. It catalyses the reaction IMP + L-aspartate + GTP = N(6)-(1,2-dicarboxyethyl)-AMP + GDP + phosphate + 2 H(+). The protein operates within purine metabolism; AMP biosynthesis via de novo pathway; AMP from IMP: step 1/2. Plays an important role in the de novo pathway of purine nucleotide biosynthesis. Catalyzes the first committed step in the biosynthesis of AMP from IMP. This chain is Adenylosuccinate synthetase, found in Lawsonia intracellularis (strain PHE/MN1-00).